We begin with the raw amino-acid sequence, 273 residues long: Oxidized low-density lipoprotein receptor 1 (273 aa).

The tract at residues 1-22 (MTFDDLKIQTVKDQPDEKSNGK) is disordered. At 1 to 36 (MTFDDLKIQTVKDQPDEKSNGKKAKGLQFLYSPWWC) the chain is on the cytoplasmic side. Residues Cys-36 and Cys-46 are each lipidated (S-palmitoyl cysteine). The chain crosses the membrane as a helical; Signal-anchor for type II membrane protein span at residues 37–57 (LAAATLGVLCLGLVVTIMVLG). The tract at residues 58–150 (MQLSQVSDLL…SAPCPQDWIW (93 aa)) is neck. The Extracellular segment spans residues 58 to 273 (MQLSQVSDLL…CQKKANLRAQ (216 aa)). The stretch at 64-123 (SDLLTQEQANLTHQKKKLEGQISARQQAEEASQESENELKEMIETLARKLNEKSKEQMEL) forms a coiled coil. N-linked (GlcNAc...) asparagine glycosylation is present at Asn-73. The N-linked (GlcNAc...) (complex) asparagine glycan is linked to Asn-139. 3 disulfides stabilise this stretch: Cys-144/Cys-155, Cys-172/Cys-264, and Cys-243/Cys-256. The 115-residue stretch at 151–265 (HGENCYLFSS…CILAAFSICQ (115 aa)) folds into the C-type lectin domain.

In terms of assembly, homodimer; disulfide-linked. May form a hexamer composed of 3 homodimers. Interacts with HSP70. (Microbial infection) Binds to the head and beginning of the coiled stalk of N.meningitidis adhesin A (nadA) variant 3; binding can be abrogated by monoclonal antibodies against the specific regions of NadA. Binding occurs in protein microarrays, in solution and when LOX-1 is expressed on the cell surface. Post-translationally, the intrachain disulfide-bonds prevent N-glycosylation at some sites. In terms of processing, N-glycosylated. In terms of tissue distribution, expressed at high level in endothelial cells and vascular-rich organs such as placenta, lung, liver and brain, aortic intima, bone marrow, spinal cord and substantia nigra. Also expressed at the surface of dendritic cells. Widely expressed at intermediate and low level.

The protein resides in the cell membrane. Its subcellular location is the membrane raft. The protein localises to the secreted. In terms of biological role, receptor that mediates the recognition, internalization and degradation of oxidatively modified low density lipoprotein (oxLDL) by vascular endothelial cells. OxLDL is a marker of atherosclerosis that induces vascular endothelial cell activation and dysfunction, resulting in pro-inflammatory responses, pro-oxidative conditions and apoptosis. Its association with oxLDL induces the activation of NF-kappa-B through an increased production of intracellular reactive oxygen and a variety of pro-atherogenic cellular responses including a reduction of nitric oxide (NO) release, monocyte adhesion and apoptosis. In addition to binding oxLDL, it acts as a receptor for the HSP70 protein involved in antigen cross-presentation to naive T-cells in dendritic cells, thereby participating in cell-mediated antigen cross-presentation. Also involved in inflammatory process, by acting as a leukocyte-adhesion molecule at the vascular interface in endotoxin-induced inflammation. Also acts as a receptor for advanced glycation end (AGE) products, activated platelets, monocytes, apoptotic cells and both Gram-negative and Gram-positive bacteria. Functionally, (Microbial infection) May serve as a receptor for adhesin A variant 3 (nadA) of N.meningitidis. This chain is Oxidized low-density lipoprotein receptor 1 (OLR1), found in Homo sapiens (Human).